The primary structure comprises 514 residues: Nuclear hormone receptor family member nhr-85 (514 aa).

Positions 28-48 (TSFSSPPATSSSSLLSPSPSS) are disordered. The segment at residues 110–186 (TILCQVCSDK…VGMSRDAVRF (77 aa)) is a DNA-binding region (nuclear receptor). NR C4-type zinc fingers lie at residues 113-133 (CQVCSDKASGFHYGVFACEGC) and 150-174 (CTRAEDCLILRNNRNRCQCCRLKKC). Residues 216-514 (QYENLTEVMH…VSPVPTTLSE (299 aa)) form the NR LBD domain. A disordered region spans residues 465-514 (ERPRRISSSGAQEPLNLSLPHVRHQVKRDVDSDEQLEEMKVSPVPTTLSE).

The protein belongs to the nuclear hormone receptor family.

It is found in the nucleus. Orphan nuclear receptor. The polypeptide is Nuclear hormone receptor family member nhr-85 (nhr-85) (Caenorhabditis elegans).